The sequence spans 521 residues: Bifunctional purine biosynthesis protein PurH (521 aa).

The MGS-like domain maps to 1–145 (MIKQALISVS…KNHRDVTVVV (145 aa)).

It belongs to the PurH family.

The enzyme catalyses (6R)-10-formyltetrahydrofolate + 5-amino-1-(5-phospho-beta-D-ribosyl)imidazole-4-carboxamide = 5-formamido-1-(5-phospho-D-ribosyl)imidazole-4-carboxamide + (6S)-5,6,7,8-tetrahydrofolate. The catalysed reaction is IMP + H2O = 5-formamido-1-(5-phospho-D-ribosyl)imidazole-4-carboxamide. The protein operates within purine metabolism; IMP biosynthesis via de novo pathway; 5-formamido-1-(5-phospho-D-ribosyl)imidazole-4-carboxamide from 5-amino-1-(5-phospho-D-ribosyl)imidazole-4-carboxamide (10-formyl THF route): step 1/1. It functions in the pathway purine metabolism; IMP biosynthesis via de novo pathway; IMP from 5-formamido-1-(5-phospho-D-ribosyl)imidazole-4-carboxamide: step 1/1. The polypeptide is Bifunctional purine biosynthesis protein PurH (Burkholderia ambifaria (strain MC40-6)).